The sequence spans 132 residues: Small ribosomal subunit protein uS8 (132 aa).

Belongs to the universal ribosomal protein uS8 family. In terms of assembly, part of the 30S ribosomal subunit. Contacts proteins S5 and S12.

Functionally, one of the primary rRNA binding proteins, it binds directly to 16S rRNA central domain where it helps coordinate assembly of the platform of the 30S subunit. This chain is Small ribosomal subunit protein uS8, found in Pseudarthrobacter chlorophenolicus (strain ATCC 700700 / DSM 12829 / CIP 107037 / JCM 12360 / KCTC 9906 / NCIMB 13794 / A6) (Arthrobacter chlorophenolicus).